A 208-amino-acid polypeptide reads, in one-letter code: MIGLVGRKVGMTRIFNEDGVSVPVTVIEIEANRVTQVKTLENDGYTAVQVTTGSKKANRVTKPEAGHFVKAGVEAGRGLWEFRTEGEEFTLGQEINVDIFADVKKVDVTGTSKGKGFQGGVKRWNFRTQDATHGNSLSHRVLGSIGQNQTPGRVFKGKKMAGHLGAERVTVQSLEVVRVDAERKLLLVKGSVPGAINGDVIVKPAVKA.

At glutamine 149 the chain carries N5-methylglutamine.

It belongs to the universal ribosomal protein uL3 family. Part of the 50S ribosomal subunit. Forms a cluster with proteins L14 and L19. In terms of processing, methylated by PrmB.

Functionally, one of the primary rRNA binding proteins, it binds directly near the 3'-end of the 23S rRNA, where it nucleates assembly of the 50S subunit. This is Large ribosomal subunit protein uL3 from Haemophilus influenzae (strain 86-028NP).